The chain runs to 657 residues: UvrABC system protein B (657 aa).

A Helicase ATP-binding domain is found at 29–416; the sequence is KLAEFQTNEQ…LSHNNVVEQL (388 aa). 42-49 serves as a coordination point for ATP; the sequence is GATGTGKT. Residues 95-118 carry the Beta-hairpin motif; it reads YFDFYQPEAYLPAKGVYIEKSATV. The Helicase C-terminal domain maps to 435–597; sequence QVEDLVSEII…KTPMTVQKPI (163 aa). Positions 615 to 650 constitute a UVR domain; sequence AALIKQLTKEMKQAAANQNYELAIEIRDSIFELEKQ.

Belongs to the UvrB family. Forms a heterotetramer with UvrA during the search for lesions. Interacts with UvrC in an incision complex.

The protein resides in the cytoplasm. In terms of biological role, the UvrABC repair system catalyzes the recognition and processing of DNA lesions. A damage recognition complex composed of 2 UvrA and 2 UvrB subunits scans DNA for abnormalities. Upon binding of the UvrA(2)B(2) complex to a putative damaged site, the DNA wraps around one UvrB monomer. DNA wrap is dependent on ATP binding by UvrB and probably causes local melting of the DNA helix, facilitating insertion of UvrB beta-hairpin between the DNA strands. Then UvrB probes one DNA strand for the presence of a lesion. If a lesion is found the UvrA subunits dissociate and the UvrB-DNA preincision complex is formed. This complex is subsequently bound by UvrC and the second UvrB is released. If no lesion is found, the DNA wraps around the other UvrB subunit that will check the other stand for damage. This is UvrABC system protein B from Mycoplasma pneumoniae (strain ATCC 29342 / M129 / Subtype 1) (Mycoplasmoides pneumoniae).